A 501-amino-acid polypeptide reads, in one-letter code: Lysine--tRNA ligase (501 aa).

Residues Glu-410 and Glu-417 each contribute to the Mg(2+) site.

The protein belongs to the class-II aminoacyl-tRNA synthetase family. In terms of assembly, homodimer. The cofactor is Mg(2+).

The protein localises to the cytoplasm. It carries out the reaction tRNA(Lys) + L-lysine + ATP = L-lysyl-tRNA(Lys) + AMP + diphosphate. This chain is Lysine--tRNA ligase, found in Shewanella halifaxensis (strain HAW-EB4).